The chain runs to 514 residues: 2,3-bisphosphoglycerate-independent phosphoglycerate mutase (514 aa).

Mn(2+)-binding residues include aspartate 14 and serine 64. Catalysis depends on serine 64, which acts as the Phosphoserine intermediate. Substrate is bound by residues histidine 125, 155 to 156, arginine 187, arginine 193, 263 to 266, and lysine 337; these read RD and RADR. Mn(2+) contacts are provided by aspartate 404, histidine 408, aspartate 445, histidine 446, and histidine 463.

Belongs to the BPG-independent phosphoglycerate mutase family. Monomer. Requires Mn(2+) as cofactor.

The catalysed reaction is (2R)-2-phosphoglycerate = (2R)-3-phosphoglycerate. Its pathway is carbohydrate degradation; glycolysis; pyruvate from D-glyceraldehyde 3-phosphate: step 3/5. Its function is as follows. Catalyzes the interconversion of 2-phosphoglycerate and 3-phosphoglycerate. This chain is 2,3-bisphosphoglycerate-independent phosphoglycerate mutase, found in Hahella chejuensis (strain KCTC 2396).